We begin with the raw amino-acid sequence, 331 residues long: Ketol-acid reductoisomerase (NADP(+)) (331 aa).

In terms of domain architecture, KARI N-terminal Rossmann spans 2 to 182 (AQLFYDSDAD…GGTRAGILET (181 aa)). Residues 25 to 28 (YGSQ), Ser-51, Ser-53, and 83 to 86 (DEFQ) contribute to the NADP(+) site. His-108 is a catalytic residue. Gly-134 provides a ligand contact to NADP(+). Residues 183-328 (NFKEETETDL…KGLRSMFSWL (146 aa)) enclose the KARI C-terminal knotted domain. Mg(2+)-binding residues include Asp-191, Glu-195, Glu-227, and Glu-231. Ser-252 is a substrate binding site.

The protein belongs to the ketol-acid reductoisomerase family. The cofactor is Mg(2+).

The catalysed reaction is (2R)-2,3-dihydroxy-3-methylbutanoate + NADP(+) = (2S)-2-acetolactate + NADPH + H(+). The enzyme catalyses (2R,3R)-2,3-dihydroxy-3-methylpentanoate + NADP(+) = (S)-2-ethyl-2-hydroxy-3-oxobutanoate + NADPH + H(+). Its pathway is amino-acid biosynthesis; L-isoleucine biosynthesis; L-isoleucine from 2-oxobutanoate: step 2/4. It participates in amino-acid biosynthesis; L-valine biosynthesis; L-valine from pyruvate: step 2/4. Functionally, involved in the biosynthesis of branched-chain amino acids (BCAA). Catalyzes an alkyl-migration followed by a ketol-acid reduction of (S)-2-acetolactate (S2AL) to yield (R)-2,3-dihydroxy-isovalerate. In the isomerase reaction, S2AL is rearranged via a Mg-dependent methyl migration to produce 3-hydroxy-3-methyl-2-ketobutyrate (HMKB). In the reductase reaction, this 2-ketoacid undergoes a metal-dependent reduction by NADPH to yield (R)-2,3-dihydroxy-isovalerate. The sequence is that of Ketol-acid reductoisomerase (NADP(+)) from Synechococcus sp. (strain CC9902).